The chain runs to 547 residues: Elongator complex protein 3 (547 aa).

In terms of domain architecture, Radical SAM core spans 82 to 372; it reads RTASGIAVVA…YRVQRDIPMP (291 aa). Residues Cys99, Cys109, and Cys112 each coordinate [4Fe-4S] cluster. Ser161 is modified (phosphoserine). Lys164 lines the acetyl-CoA pocket. At Tyr202 the chain carries Phosphotyrosine; by ALK. Position 229 is an N6-methyllysine (Lys229). Residue Tyr251 is modified to Phosphotyrosine. Residues 396–547 form the N-acetyltransferase domain; sequence IQCRDVRTRE…QGPYMVKMLK (152 aa). Acetyl-CoA is bound by residues 474–477, 497–499, and Tyr530; these read ELHV and FGM.

This sequence belongs to the ELP3 family. Component of the elongator complex which consists of ELP1, ELP2, ELP3, ELP4, ELP5 and ELP6. ELP1, ELP2 and ELP3 form the elongator core complex. Interacts with alpha-tubulin. Requires [4Fe-4S] cluster as cofactor. In terms of processing, tyrosine-phosphorylated; phosphorylation on Tyr-202 does not affect elongator complex integrity or ELP3 protein stability. Also serine/threonine-phosphorylated. In terms of tissue distribution, expressed in the cerebellum and spinal motor neurons.

The protein resides in the cytoplasm. The protein localises to the nucleus. It carries out the reaction uridine(34) in tRNA + acetyl-CoA + S-adenosyl-L-methionine + H2O = 5-(carboxymethyl)uridine(34) in tRNA + 5'-deoxyadenosine + L-methionine + CoA + 2 H(+). It functions in the pathway tRNA modification; 5-methoxycarbonylmethyl-2-thiouridine-tRNA biosynthesis. In terms of biological role, catalytic tRNA acetyltransferase subunit of the elongator complex which is required for multiple tRNA modifications, including mcm5U (5-methoxycarbonylmethyl uridine), mcm5s2U (5-methoxycarbonylmethyl-2-thiouridine), and ncm5U (5-carbamoylmethyl uridine). In the elongator complex, acts as a tRNA uridine(34) acetyltransferase by mediating formation of carboxymethyluridine in the wobble base at position 34 in tRNAs. May also act as a protein lysine acetyltransferase by mediating acetylation of target proteins; such activity is however unclear in vivo and recent evidences suggest that ELP3 primarily acts as a tRNA acetyltransferase. Involved in neurogenesis: regulates the migration and branching of projection neurons in the developing cerebral cortex, through a process depending on alpha-tubulin acetylation. Required for acetylation of GJA1 in the developing cerebral cortex. The protein is Elongator complex protein 3 of Homo sapiens (Human).